The primary structure comprises 241 residues: PHD finger protein ALFIN-LIKE 1 (241 aa).

Ala2 bears the N-acetylalanine mark. Residues 142-182 (DGKPSMDLGSKSRNGVKRSIEGQTKSTPKLMEESYEDEDDE) form a disordered region. The segment at 185-237 (DTLCGSCGGNYTNDEFWICCDVCERWYHGKCVKITPAKAESIKQYKCPSCCTK) adopts a PHD-type zinc-finger fold.

Belongs to the Alfin family. As to quaternary structure, interacts with H3K4me3 and to a lesser extent with H3K4me2. In terms of tissue distribution, ubiquitously expressed.

Its subcellular location is the nucleus. Histone-binding component that specifically recognizes H3 tails trimethylated on 'Lys-4' (H3K4me3), which mark transcription start sites of virtually all active genes. This Arabidopsis thaliana (Mouse-ear cress) protein is PHD finger protein ALFIN-LIKE 1 (AL1).